Reading from the N-terminus, the 495-residue chain is UDP-glycosyltransferase 73C6 (495 aa).

UDP-alpha-D-glucose contacts are provided by residues Ser296, 356-358 (SPQ), 373-381 (HCGWNSTLE), and 395-398 (FADQ). The segment at 449-475 (SDDAKERRRRAKELGESAHKAVEEGGS) is disordered. Positions 450–471 (DDAKERRRRAKELGESAHKAVE) are enriched in basic and acidic residues.

This sequence belongs to the UDP-glycosyltransferase family. In terms of tissue distribution, expressed in leaves and flowers, and at a very low level in roots.

Its function is as follows. Acts as a UDP-glucose:flavonol-3-O-glycoside-7-O-glucosyltransferase. 6- and 7-hydroxyflavone, but not 3- or 5-hydroxyflavone are accepted as substrates. Possesses low quercetin 3-O-glucosyltransferase, 7-O-glucosyltransferase and 4'-O-glucosyltransferase activities in vitro. In Arabidopsis thaliana (Mouse-ear cress), this protein is UDP-glycosyltransferase 73C6 (UGT73C6).